The following is a 72-amino-acid chain: Translational regulator CsrA (72 aa).

The protein belongs to the CsrA/RsmA family. In terms of assembly, homodimer; the beta-strands of each monomer intercalate to form a hydrophobic core, while the alpha-helices form wings that extend away from the core.

The protein localises to the cytoplasm. A translational regulator that binds mRNA to regulate translation initiation and/or mRNA stability. Usually binds in the 5'-UTR at or near the Shine-Dalgarno sequence preventing ribosome-binding, thus repressing translation. Its main target seems to be the major flagellin gene, while its function is anatagonized by FliW. In Agathobacter rectalis (strain ATCC 33656 / DSM 3377 / JCM 17463 / KCTC 5835 / VPI 0990) (Eubacterium rectale), this protein is Translational regulator CsrA.